We begin with the raw amino-acid sequence, 857 residues long: Bifunctional levopimaradiene synthase, chloroplastic (857 aa).

The N-terminal 33 residues, 1–33 (MALPSSSLSSQIHTGATTQCIPHFHGSLNAGTS), are a transit peptide targeting the chloroplast. A substrate-binding site is contributed by K257. 2 residues coordinate Mg(2+): D390 and D392. Positions 390-393 (DIDD) match the DXDD motif motif. K477 serves as a coordination point for substrate. Residues D609, D613, N753, T757, and E761 each contribute to the Mg(2+) site. The DDXXD motif signature appears at 609 to 613 (DDLYD).

The protein belongs to the terpene synthase family. Tpsd subfamily. Mg(2+) serves as cofactor.

It localises to the plastid. The protein localises to the chloroplast. It catalyses the reaction (2E,6E,10E)-geranylgeranyl diphosphate = (+)-copalyl diphosphate. It carries out the reaction (+)-copalyl diphosphate = abieta-7,13-diene + diphosphate. The catalysed reaction is (+)-copalyl diphosphate = abieta-8(14),12-diene + diphosphate. The enzyme catalyses (+)-copalyl diphosphate = neoabietadiene + diphosphate. It functions in the pathway terpene metabolism; oleoresin biosynthesis. Involved in defensive oleoresin formation in conifers in response to insect attack or other injury. Involved in diterpene (C20) olefins biosynthesis. Bifunctional enzyme that catalyzes two sequential cyclizations of geranylgeranyl diphosphate (GGPP) to levopimaradiene. Levopimaradiene is the major products of the enzyme with abietadiene and neoabietadiene. No activity with farnesyl diphosphate (FPP) as substrate. This Pinus contorta (Shore pine) protein is Bifunctional levopimaradiene synthase, chloroplastic.